The chain runs to 144 residues: Large ribosomal subunit protein uL13 (144 aa).

The protein belongs to the universal ribosomal protein uL13 family. Part of the 50S ribosomal subunit.

This protein is one of the early assembly proteins of the 50S ribosomal subunit, although it is not seen to bind rRNA by itself. It is important during the early stages of 50S assembly. This Buchnera aphidicola subsp. Baizongia pistaciae (strain Bp) protein is Large ribosomal subunit protein uL13.